A 351-amino-acid polypeptide reads, in one-letter code: Photosystem II D2 protein (351 aa).

The chain crosses the membrane as a helical span at residues 39–59 (TAYLAIGGWLTGTTFVTSWYT). Residue H116 coordinates chlorophyll a. A helical transmembrane segment spans residues 123–139 (GFMLRQFEIARLVGIRP). Residues Q128 and N141 each contribute to the pheophytin a site. A helical membrane pass occupies residues 151–164 (VFVSVFLMYPLGQS). A chlorophyll a-binding site is contributed by H196. A helical transmembrane segment spans residues 206-226 (GALLCAIHGATVENTLFEDGE). 2 residues coordinate a plastoquinone: H213 and F260. H213 contributes to the Fe cation binding site. H267 serves as a coordination point for Fe cation. The helical transmembrane segment at 277–293 (GLWTSSIGIIGLALNLR) threads the bilayer.

The protein belongs to the reaction center PufL/M/PsbA/D family. As to quaternary structure, PSII is composed of 1 copy each of membrane proteins PsbA, PsbB, PsbC, PsbD, PsbE, PsbF, PsbH, PsbI, PsbJ, PsbK, PsbL, PsbM, PsbT, PsbX, PsbY, PsbZ, Psb30/Ycf12, peripheral proteins PsbO, CyanoQ (PsbQ), PsbU, PsbV and a large number of cofactors. It forms dimeric complexes. Requires The D1/D2 heterodimer binds P680, chlorophylls that are the primary electron donor of PSII, and subsequent electron acceptors. It shares a non-heme iron and each subunit binds pheophytin, quinone, additional chlorophylls, carotenoids and lipids. There is also a Cl(-1) ion associated with D1 and D2, which is required for oxygen evolution. The PSII complex binds additional chlorophylls, carotenoids and specific lipids. as cofactor.

It is found in the cellular thylakoid membrane. The catalysed reaction is 2 a plastoquinone + 4 hnu + 2 H2O = 2 a plastoquinol + O2. Its function is as follows. Photosystem II (PSII) is a light-driven water:plastoquinone oxidoreductase that uses light energy to abstract electrons from H(2)O, generating O(2) and a proton gradient subsequently used for ATP formation. It consists of a core antenna complex that captures photons, and an electron transfer chain that converts photonic excitation into a charge separation. The D1/D2 (PsbA/PsbD) reaction center heterodimer binds P680, the primary electron donor of PSII as well as several subsequent electron acceptors. D2 is needed for assembly of a stable PSII complex. This Synechococcus sp. (strain WH7803) protein is Photosystem II D2 protein.